The chain runs to 558 residues: DEAD-box ATP-dependent RNA helicase 49 (558 aa).

The Q motif motif lies at 16–44; sequence FSELKPPLSEDIIEALDRSGFEVCTPVQA. The Helicase ATP-binding domain occupies 47 to 226; it reads IPFLCSHKDV…KAGLRNAMEV (180 aa). 60 to 67 is an ATP binding site; that stretch reads AATGSGKT. The DEAD box signature appears at 174–177; the sequence is DEAD. The 148-residue stretch at 255-402 folds into the Helicase C-terminal domain; the sequence is QLVHLLIENK…ERKCSENASD (148 aa). The tract at residues 506-558 is disordered; it reads KDKLQQEKRGKRKKSSKEAVDDSNKASRKRKLTGRQRQTIQTAQDEEEMNLRL. Residues 521–530 are compositionally biased toward basic and acidic residues; the sequence is SKEAVDDSNK. Acidic residues predominate over residues 549–558; the sequence is QDEEEMNLRL.

Belongs to the DEAD box helicase family. DDX55/SPB4 subfamily.

It catalyses the reaction ATP + H2O = ADP + phosphate + H(+). The chain is DEAD-box ATP-dependent RNA helicase 49 (RH49) from Arabidopsis thaliana (Mouse-ear cress).